The chain runs to 459 residues: ATP synthase subunit beta (459 aa).

Position 148–155 (148–155 (GGAGVGKT)) interacts with ATP.

The protein belongs to the ATPase alpha/beta chains family. As to quaternary structure, F-type ATPases have 2 components, CF(1) - the catalytic core - and CF(0) - the membrane proton channel. CF(1) has five subunits: alpha(3), beta(3), gamma(1), delta(1), epsilon(1). CF(0) has three main subunits: a(1), b(2) and c(9-12). The alpha and beta chains form an alternating ring which encloses part of the gamma chain. CF(1) is attached to CF(0) by a central stalk formed by the gamma and epsilon chains, while a peripheral stalk is formed by the delta and b chains.

Its subcellular location is the cell inner membrane. The enzyme catalyses ATP + H2O + 4 H(+)(in) = ADP + phosphate + 5 H(+)(out). Produces ATP from ADP in the presence of a proton gradient across the membrane. The catalytic sites are hosted primarily by the beta subunits. This chain is ATP synthase subunit beta, found in Hahella chejuensis (strain KCTC 2396).